A 233-amino-acid chain; its full sequence is Small ribosomal subunit protein uS3 (233 aa).

Positions 39–107 (VRTFLTKELK…PAQINISEVR (69 aa)) constitute a KH type-2 domain.

The protein belongs to the universal ribosomal protein uS3 family. In terms of assembly, part of the 30S ribosomal subunit. Forms a tight complex with proteins S10 and S14.

Its function is as follows. Binds the lower part of the 30S subunit head. Binds mRNA in the 70S ribosome, positioning it for translation. The polypeptide is Small ribosomal subunit protein uS3 (Pseudoalteromonas translucida (strain TAC 125)).